The sequence spans 236 residues: Glucosamine-6-phosphate deaminase (236 aa).

The active-site Proton acceptor; for enolization step is the Asp62. Residue Asn128 is the For ring-opening step of the active site. His130 acts as the Proton acceptor; for ring-opening step in catalysis. Glu135 (for ring-opening step) is an active-site residue.

It belongs to the glucosamine/galactosamine-6-phosphate isomerase family. NagB subfamily.

It carries out the reaction alpha-D-glucosamine 6-phosphate + H2O = beta-D-fructose 6-phosphate + NH4(+). Its pathway is amino-sugar metabolism; N-acetylneuraminate degradation; D-fructose 6-phosphate from N-acetylneuraminate: step 5/5. Functionally, catalyzes the reversible isomerization-deamination of glucosamine 6-phosphate (GlcN6P) to form fructose 6-phosphate (Fru6P) and ammonium ion. The polypeptide is Glucosamine-6-phosphate deaminase (Oenococcus oeni (strain ATCC BAA-331 / PSU-1)).